A 459-amino-acid chain; its full sequence is NADH-ubiquinone oxidoreductase chain 4 (459 aa).

13 helical membrane-spanning segments follow: residues 22–42, 61–81, 94–113, 114–134, 146–166, 197–217, 225–245, 258–278, 285–304, 308–330, 352–372, 380–400, and 437–457; these read HLSY…LQWL, PIST…ILVS, RTFT…AFSA, LEMM…LIII, AGTY…IALT, WFAL…HLWL, PIAG…YGII, LSYP…LICL, SLIA…AALL, LSIT…LFCL, LLPL…ALPP, LTII…TGLG, and LIMM…QLMT.

It belongs to the complex I subunit 4 family.

Its subcellular location is the mitochondrion membrane. It carries out the reaction a ubiquinone + NADH + 5 H(+)(in) = a ubiquinol + NAD(+) + 4 H(+)(out). Its function is as follows. Core subunit of the mitochondrial membrane respiratory chain NADH dehydrogenase (Complex I) that is believed to belong to the minimal assembly required for catalysis. Complex I functions in the transfer of electrons from NADH to the respiratory chain. The immediate electron acceptor for the enzyme is believed to be ubiquinone. The protein is NADH-ubiquinone oxidoreductase chain 4 (MT-ND4) of Pelomedusa subrufa (African side-necked turtle).